Reading from the N-terminus, the 275-residue chain is Thiazole synthase (275 aa).

The active-site Schiff-base intermediate with DXP is the Lys-108. Residues Gly-169, 196-197 (AG), and 218-219 (NT) contribute to the 1-deoxy-D-xylulose 5-phosphate site.

Belongs to the ThiG family. In terms of assembly, homotetramer. Forms heterodimers with either ThiH or ThiS.

It localises to the cytoplasm. It carries out the reaction [ThiS sulfur-carrier protein]-C-terminal-Gly-aminoethanethioate + 2-iminoacetate + 1-deoxy-D-xylulose 5-phosphate = [ThiS sulfur-carrier protein]-C-terminal Gly-Gly + 2-[(2R,5Z)-2-carboxy-4-methylthiazol-5(2H)-ylidene]ethyl phosphate + 2 H2O + H(+). The protein operates within cofactor biosynthesis; thiamine diphosphate biosynthesis. Catalyzes the rearrangement of 1-deoxy-D-xylulose 5-phosphate (DXP) to produce the thiazole phosphate moiety of thiamine. Sulfur is provided by the thiocarboxylate moiety of the carrier protein ThiS. In vitro, sulfur can be provided by H(2)S. The chain is Thiazole synthase from Ralstonia nicotianae (strain ATCC BAA-1114 / GMI1000) (Ralstonia solanacearum).